An 86-amino-acid chain; its full sequence is Small ribosomal subunit protein uS17 (86 aa).

This sequence belongs to the universal ribosomal protein uS17 family. In terms of assembly, part of the 30S ribosomal subunit.

In terms of biological role, one of the primary rRNA binding proteins, it binds specifically to the 5'-end of 16S ribosomal RNA. The sequence is that of Small ribosomal subunit protein uS17 from Helicobacter acinonychis (strain Sheeba).